The sequence spans 280 residues: uncharacterized protein (280 aa).

This is an uncharacterized protein from Acanthamoeba polyphaga (Amoeba).